Consider the following 1071-residue polypeptide: ATP-dependent helicase/deoxyribonuclease subunit B (1071 aa).

The protein belongs to the helicase family. AddB/RexB type 2 subfamily. As to quaternary structure, heterodimer of AddA and RexB. The cofactor is Mg(2+).

The heterodimer acts as both an ATP-dependent DNA helicase and an ATP-dependent, dual-direction single-stranded exonuclease. Recognizes the chi site generating a DNA molecule suitable for the initiation of homologous recombination. This subunit has 5' -&gt; 3' nuclease activity but not helicase activity. This Streptococcus pyogenes serotype M4 (strain MGAS10750) protein is ATP-dependent helicase/deoxyribonuclease subunit B.